Here is a 60-residue protein sequence, read N- to C-terminus: Cytotoxin 1 (60 aa).

4 disulfides stabilise this stretch: Cys-3-Cys-21, Cys-14-Cys-38, Cys-42-Cys-53, and Cys-54-Cys-59.

Belongs to the three-finger toxin family. Short-chain subfamily. Type IA cytotoxin sub-subfamily. Monomer in solution; Homodimer and oligomer in the presence of negatively charged lipids forming a pore with a size ranging between 20 and 30 Angstroms. Expressed by the venom gland.

It is found in the secreted. The protein localises to the target cell membrane. Shows cytolytic activity on many different cells by forming pore in lipid membranes. In vivo, increases heart rate or kills the animal by cardiac arrest. In addition, it binds to heparin with high affinity, interacts with Kv channel-interacting protein 1 (KCNIP1) in a calcium-independent manner, and binds to integrin alpha-V/beta-3 (ITGAV/ITGB3) with moderate affinity. In Naja naja (Indian cobra), this protein is Cytotoxin 1.